The sequence spans 776 residues: MASLIYRQLLTNSYTVELSDEINTIGSEKSQNVTINPGPFAQTNYAPVVLESWEVNDSTTIEPVLDGPYQPTSFKPPSDYWILLNPTNQQVVLEGTNKTDIWVALLLVEPNVTNQSRQYTLFGETKQITVENNTNKWKFFEMFRSSVSAEFQHKRTLTSDTKLAGFLKHYNSVWTFHGETPHATTDYSSSTSNLSEVETTIHVEFYIIPRSQESKCVEYINTGLPPMQNTRNIVPVALSSRAVTYQRAQVNEDIIISKTSLWKEMQYNRDIIIRFKFNNSIVKLGGLGYKWSEISFKAANYQYNYLRDGEQVTAHTTCSVNGVNNFSYNGGPLPTHFSVSRYEVIKENSYVYVNYWDDSQAFRNMVYVRSLTANLNSVKCSGGNYNFQLPVGAWPVMSGGAVSLHFAGVTLSTKFTDFVSLNSLRFRFSLTVEDPPFSILRTRVSGLYGLPAFNPNSEHEYYEIARRFSLISLVPSNDDYQTPIMNSVTVRQDLERQLGDLREEFNSLSQEIAMTQLIDLALLPLDMFSMFSGIKSTIDAAKSMATKVMKKFKRSGLATSISELTRSLSNAASSVSRSSSIRSNISSISVWTDVSEQITGSSDSVRNISTQTSASRRLRLREITTQTEGMNFIDISAAVLKTKIDKSTHISPDTLPDIIETESSEKFIPKRAYRVLKDDEVMEADVDGKFFAYKVDTFEEVPFDVDKFVDLVTDSPVISAIIDFKTLKNLNDNYGITRSQALDLIRSDPRVLRDFINQNNPIIKNRIEQLILQCRL.

A spike head region spans residues 65-224; it reads LDGPYQPTSF…KCVEYINTGL (160 aa). Positions 248-479 are spike body and stalk (antigen domain); that stretch reads AQVNEDIIIS…LISLVPSNDD (232 aa). The DGE motif; interaction with ITGA2/ITGB1 heterodimer motif lies at 308-310; the sequence is DGE. C318 and C380 are joined by a disulfide. Residues 389-409 are hydrophobic; possible role in virus entry into host cell; it reads LPVGAWPVMSGGAVSLHFAGV. A YGL motif; interaction with ITGA4 motif is present at residues 448–450; that stretch reads YGL. A coiled-coil region spans residues 484–516; it reads IMNSVTVRQDLERQLGDLREEFNSLSQEIAMTQ. The spike foot stretch occupies residues 510-776; it reads QEIAMTQLID…IEQLILQCRL (267 aa). Positions 643-645 match the KID motif; interaction with HSPA8 motif; sequence KID.

This sequence belongs to the rotavirus VP4 family. As to quaternary structure, homotrimer. VP4 adopts a dimeric appearance above the capsid surface, while forming a trimeric base anchored inside the capsid layer. Only hints of the third molecule are observed above the capsid surface. It probably performs a series of molecular rearrangements during viral entry. Prior to trypsin cleavage, it is flexible. The priming trypsin cleavage triggers its rearrangement into rigid spikes with approximate two-fold symmetry of their protruding parts. After an unknown second triggering event, cleaved VP4 may undergo another rearrangement, in which two VP5* subunits fold back on themselves and join a third subunit to form a tightly associated trimer, shaped like a folded umbrella. Interacts with VP6. Interacts with VP7. Homotrimer. The trimer is coiled-coil stabilized by its C-terminus, however, its N-terminus, known as antigen domain or 'body', seems to be flexible allowing it to self-associate either as a dimer or a trimer. In terms of processing, proteolytic cleavage by trypsin results in activation of VP4 functions and greatly increases infectivity. The penetration into the host cell is dependent on trypsin treatment of VP4. It produces two peptides, VP5* and VP8* that remain associated with the virion. Cleavage of VP4 by trypsin probably occurs in vivo in the lumen of the intestine prior to infection of enterocytes. Trypsin seems to be incorporated into the three-layered viral particles but remains inactive as long as the viral outer capsid is intact and would only be activated upon the solubilization of the latter.

It is found in the virion. Its subcellular location is the host rough endoplasmic reticulum. The protein resides in the host cell membrane. It localises to the host cytoplasm. The protein localises to the host cytoskeleton. It is found in the host endoplasmic reticulum-Golgi intermediate compartment. Spike-forming protein that mediates virion attachment to the host epithelial cell receptors and plays a major role in cell penetration, determination of host range restriction and virulence. Rotavirus attachment and entry into the host cell probably involves multiple sequential contacts between the outer capsid proteins VP4 and VP7, and the cell receptors. It is subsequently lost, together with VP7, following virus entry into the host cell. Following entry into the host cell, low intracellular or intravesicular Ca(2+) concentration probably causes the calcium-stabilized VP7 trimers to dissociate from the virion. This step is probably necessary for the membrane-disrupting entry step and the release of VP4, which is locked onto the virion by VP7. During the virus exit from the host cell, VP4 seems to be required to target the newly formed virions to the host cell lipid rafts. Its function is as follows. Forms the spike 'foot' and 'body' and acts as a membrane permeabilization protein that mediates release of viral particles from endosomal compartments into the cytoplasm. During entry, the part of VP5* that protrudes from the virus folds back on itself and reorganizes from a local dimer to a trimer. This reorganization may be linked to membrane penetration by exposing VP5* hydrophobic region. In integrin-dependent strains, VP5* targets the integrin heterodimer ITGA2/ITGB1 for cell attachment. In terms of biological role, forms the head of the spikes and mediates the recognition of specific host cell surface glycans. It is the viral hemagglutinin and an important target of neutralizing antibodies. In sialic acid-dependent strains, VP8* binds to host cell sialic acid, most probably a ganglioside, providing the initial contact. In some other strains, VP8* mediates the attachment to histo-blood group antigens (HBGAs) for viral entry. This is Outer capsid protein VP4 from Rotavirus A (isolate RVA/Human/Australia/McN13/1980/G3P2A[6]) (RV-A).